We begin with the raw amino-acid sequence, 491 residues long: Cytosol aminopeptidase (491 aa).

K263 and D268 together coordinate Mn(2+). The active site involves K275. Mn(2+) contacts are provided by D286, D345, and E347. R349 is an active-site residue.

Belongs to the peptidase M17 family. Requires Mn(2+) as cofactor.

It is found in the cytoplasm. It carries out the reaction Release of an N-terminal amino acid, Xaa-|-Yaa-, in which Xaa is preferably Leu, but may be other amino acids including Pro although not Arg or Lys, and Yaa may be Pro. Amino acid amides and methyl esters are also readily hydrolyzed, but rates on arylamides are exceedingly low.. The enzyme catalyses Release of an N-terminal amino acid, preferentially leucine, but not glutamic or aspartic acids.. Its function is as follows. Presumably involved in the processing and regular turnover of intracellular proteins. Catalyzes the removal of unsubstituted N-terminal amino acids from various peptides. The protein is Cytosol aminopeptidase (pepA) of Haemophilus influenzae (strain ATCC 51907 / DSM 11121 / KW20 / Rd).